Here is a 284-residue protein sequence, read N- to C-terminus: tRNA N(3)-cytidine methyltransferase METTL6 (284 aa).

The S-adenosyl-L-methionine site is built by W45 and Y49. S-adenosyl-L-homocysteine is bound by residues Y49, H61, E85, G87, D110, D136, L137, and I157. The S-adenosyl-L-methionine site is built by G87, D110, D136, L137, and I157.

It belongs to the methyltransferase superfamily. METL family. In terms of assembly, monomer. Interacts with SARS1/SerRS; interaction is mediated via tRNA(Ser) and is required for N(3)-methylcytidine methylation.

The protein localises to the cytoplasm. It is found in the nucleus. It catalyses the reaction cytidine(32) in tRNA(Ser) + S-adenosyl-L-methionine = N(3)-methylcytidine(32) in tRNA(Ser) + S-adenosyl-L-homocysteine + H(+). In terms of biological role, S-adenosyl-L-methionine-dependent methyltransferase that mediates N(3)-methylcytidine modification of residue 32 of the tRNA anticodon loop of tRNA(Ser), including tRNA(Ser)(UGA) and tRNA(Ser)(GCU). Interaction with SARS1/SerRS is required for N(3)-methylcytidine methylation. The protein is tRNA N(3)-cytidine methyltransferase METTL6 of Homo sapiens (Human).